The sequence spans 582 residues: Acylamino-acid-releasing enzyme (582 aa).

Catalysis depends on charge relay system residues S445, D524, and H556.

It belongs to the peptidase S9C family.

The protein localises to the cytoplasm. It carries out the reaction Cleavage of an N-acetyl or N-formyl amino acid from the N-terminus of a polypeptide.. This enzyme catalyzes the hydrolysis of the N-terminal peptide bond of an N-acetylated peptide to generate an N-acetylated amino acid and a peptide with a free N-terminus. This Aeropyrum pernix (strain ATCC 700893 / DSM 11879 / JCM 9820 / NBRC 100138 / K1) protein is Acylamino-acid-releasing enzyme.